Consider the following 444-residue polypeptide: Probable polygalacturonase At1g80170 (444 aa).

A signal peptide spans Met1–Ala28. 6 PbH1 repeats span residues Cys208 to Val234, Ser235 to Lys256, Ser258 to Ser278, Val288 to Thr309, Val317 to Gln338, and Thr351 to Cys378. Asp249 serves as the catalytic Proton donor. His272 is an active-site residue.

Belongs to the glycosyl hydrolase 28 family. As to expression, expressed in young, mature and dehiscing anthers. Found in stems, but not in roots or in abscission zone of floral organs.

Its subcellular location is the secreted. The protein localises to the cell wall. The catalysed reaction is (1,4-alpha-D-galacturonosyl)n+m + H2O = (1,4-alpha-D-galacturonosyl)n + (1,4-alpha-D-galacturonosyl)m.. This is Probable polygalacturonase At1g80170 from Arabidopsis thaliana (Mouse-ear cress).